The primary structure comprises 451 residues: Tubulin alpha chain (451 aa).

An MREC motif motif is present at residues 1 to 4 (MREC). Residue Q11 coordinates GTP. Residue K40 is modified to N6-acetyllysine. GTP-binding residues include E71, S140, G144, T145, T179, N206, and N228. Position 71 (E71) interacts with Mg(2+). Residue E254 is part of the active site. The interval 432-451 (YEEVGVDSVEGEGEEEGEEY) is disordered. Position 445 is a 5-glutamyl polyglutamate (E445).

It belongs to the tubulin family. In terms of assembly, dimer of alpha and beta chains. A typical microtubule is a hollow water-filled tube with an outer diameter of 25 nm and an inner diameter of 15 nM. Alpha-beta heterodimers associate head-to-tail to form protofilaments running lengthwise along the microtubule wall with the beta-tubulin subunit facing the microtubule plus end conferring a structural polarity. Microtubules usually have 13 protofilaments but different protofilament numbers can be found in some organisms and specialized cells. Mg(2+) is required as a cofactor. In terms of processing, some glutamate residues at the C-terminus are polyglycylated, resulting in polyglycine chains on the gamma-carboxyl group. Glycylation is mainly limited to tubulin incorporated into axonemes (cilia and flagella) whereas glutamylation is prevalent in neuronal cells, centrioles, axonemes, and the mitotic spindle. Both modifications can coexist on the same protein on adjacent residues, and lowering polyglycylation levels increases polyglutamylation, and reciprocally. The precise function of polyglycylation is still unclear. Some glutamate residues at the C-terminus are polyglutamylated, resulting in polyglutamate chains on the gamma-carboxyl group. Polyglutamylation plays a key role in microtubule severing by spastin (SPAST). SPAST preferentially recognizes and acts on microtubules decorated with short polyglutamate tails: severing activity by SPAST increases as the number of glutamates per tubulin rises from one to eight, but decreases beyond this glutamylation threshold. Post-translationally, acetylation of alpha chains at Lys-40 is located inside the microtubule lumen. This modification has been correlated with increased microtubule stability, intracellular transport and ciliary assembly. In terms of processing, undergoes a tyrosination/detyrosination cycle, the cyclic removal and re-addition of a C-terminal tyrosine residue by the enzymes tubulin tyrosine carboxypeptidase (MATCAP, VASH1 or VASH2) and tubulin tyrosine ligase (TTL), respectively. Tyrosination promotes microtubule interaction with CAP-Gly microtubule plus-end tracking proteins. Tyrosinated tubulins regulate the initiation of dynein-driven motility. Post-translationally, detyrosination is involved in metaphase plate congression by guiding chromosomes during mitosis. Detyrosination increases microtubules-dependent mechanotransduction in dystrophic cardiac and skeletal muscle. In cardiomyocytes, detyrosinated microtubules are required to resist to contractile compression during contraction.

It localises to the cytoplasm. Its subcellular location is the cytoskeleton. The catalysed reaction is GTP + H2O = GDP + phosphate + H(+). Functionally, tubulin is the major constituent of microtubules, a cylinder consisting of laterally associated linear protofilaments composed of alpha- and beta-tubulin heterodimers. Microtubules grow by the addition of GTP-tubulin dimers to the microtubule end, where a stabilizing cap forms. Below the cap, tubulin dimers are in GDP-bound state, owing to GTPase activity of alpha-tubulin. This Torpedo marmorata (Marbled electric ray) protein is Tubulin alpha chain.